The chain runs to 476 residues: Cardiolipin synthase (476 aa).

2 helical membrane-spanning segments follow: residues 2 to 22 and 31 to 51; these read HLFINMIFLINIVFIISIIFI and WAWILILTFLPILGFIIYILF. 2 PLD phosphodiesterase domains span residues 207 to 234 and 389 to 416; these read INYRNHRKILIIDSKVAFLGGFNIGDEY and EKGFLHAKTIVADSSICSVGTANMDIRS. Catalysis depends on residues His-212, Lys-214, Asp-219, His-394, Lys-396, and Asp-401.

The protein belongs to the phospholipase D family. Cardiolipin synthase subfamily.

The protein resides in the cell membrane. It catalyses the reaction 2 a 1,2-diacyl-sn-glycero-3-phospho-(1'-sn-glycerol) = a cardiolipin + glycerol. Functionally, catalyzes the reversible phosphatidyl group transfer from one phosphatidylglycerol molecule to another to form cardiolipin (CL) (diphosphatidylglycerol) and glycerol. The chain is Cardiolipin synthase (cls) from Clostridium perfringens (strain ATCC 13124 / DSM 756 / JCM 1290 / NCIMB 6125 / NCTC 8237 / Type A).